Reading from the N-terminus, the 249-residue chain is Expansin-A19 (249 aa).

A signal peptide spans 1–21; it reads MGNIFLQLLAVVALCIAPARS. The Expansin-like EG45 domain maps to 41–154; it reads GGACGYGNLY…QQVKCWRYGG (114 aa). N-linked (GlcNAc...) asparagine glycans are attached at residues N116 and N216. The 80-residue stretch at 164–243 folds into the Expansin-like CBD domain; sequence YFELVLVTNM…GWSFGQTFST (80 aa).

This sequence belongs to the expansin family. Expansin A subfamily.

Its subcellular location is the secreted. The protein localises to the cell wall. The protein resides in the membrane. Functionally, may cause loosening and extension of plant cell walls by disrupting non-covalent bonding between cellulose microfibrils and matrix glucans. No enzymatic activity has been found. May be required for rapid internodal elongation in deepwater rice during submergence. The chain is Expansin-A19 (EXPA19) from Oryza sativa subsp. japonica (Rice).